A 323-amino-acid chain; its full sequence is Mitochondrial glutamate carrier 1 (323 aa).

3 Solcar repeats span residues 6 to 93 (ISLP…FRHQ), 101 to 214 (LTLP…LNQL), and 223 to 312 (SPFY…GIAE). A run of 6 helical transmembrane segments spans residues 12–32 (LINGGIAGLIGVTCVFPIDLA), 62–82 (YFGMYRGAAVNLTLVTPEKAI), 107–127 (MLAGCGAGTCQVIVTTPMEML), 189–209 (GLGATLLRDVPFSIVYFPLFA), 223–243 (SPFYVSFLAGCVAGSAAAVAV), and 292–312 (ALVIAPLFGIAQVVYFLGIAE).

It belongs to the mitochondrial carrier (TC 2.A.29) family. In terms of tissue distribution, detected in insulin-secreting beta-cells and pancreatic islets (at the protein level).

It is found in the mitochondrion inner membrane. It catalyses the reaction L-glutamate(in) + H(+)(in) = L-glutamate(out) + H(+)(out). In terms of biological role, mitochondrial glutamate/H(+) symporter. Responsible for the transport of glutamate from the cytosol into the mitochondrial matrix with the concomitant import of a proton. Plays a role in the control of glucose-stimulated insulin secretion. In Rattus norvegicus (Rat), this protein is Mitochondrial glutamate carrier 1.